A 122-amino-acid chain; its full sequence is Small ribosomal subunit protein uS13 (122 aa).

The span at 98 to 116 (VRGQKTKTNARTRKGRRKT) shows a compositional bias: basic residues. The interval 98-122 (VRGQKTKTNARTRKGRRKTVGAATK) is disordered.

Belongs to the universal ribosomal protein uS13 family. In terms of assembly, part of the 30S ribosomal subunit. Forms a loose heterodimer with protein S19. Forms two bridges to the 50S subunit in the 70S ribosome.

Located at the top of the head of the 30S subunit, it contacts several helices of the 16S rRNA. In the 70S ribosome it contacts the 23S rRNA (bridge B1a) and protein L5 of the 50S subunit (bridge B1b), connecting the 2 subunits; these bridges are implicated in subunit movement. Contacts the tRNAs in the A and P-sites. This is Small ribosomal subunit protein uS13 from Campylobacter fetus subsp. fetus (strain 82-40).